Consider the following 457-residue polypeptide: Chromosomal replication initiator protein DnaA (457 aa).

Residues 1-75 (MDAQLNNLWE…ALKIVTSRKF (75 aa)) form a domain I, interacts with DnaA modulators region. The domain II stretch occupies residues 75–118 (FKIEFYLESDLEEEKENEEKQKEEKKENTNDVDGSIVVSDEMSA). The domain III, AAA+ region stretch occupies residues 119-335 (TLNPKYTFQS…GALIRIIAYS (217 aa)). 4 residues coordinate ATP: Gly163, Gly165, Lys166, and Thr167. The tract at residues 336 to 457 (SLTNRDVSVD…NDITKKLTQK (122 aa)) is domain IV, binds dsDNA.

This sequence belongs to the DnaA family. Oligomerizes as a right-handed, spiral filament on DNA at oriC.

The protein localises to the cytoplasm. In terms of biological role, plays an essential role in the initiation and regulation of chromosomal replication. ATP-DnaA binds to the origin of replication (oriC) to initiate formation of the DNA replication initiation complex once per cell cycle. Binds the DnaA box (a 9 base pair repeat at the origin) and separates the double-stranded (ds)DNA. Forms a right-handed helical filament on oriC DNA; dsDNA binds to the exterior of the filament while single-stranded (ss)DNA is stabiized in the filament's interior. The ATP-DnaA-oriC complex binds and stabilizes one strand of the AT-rich DNA unwinding element (DUE), permitting loading of DNA polymerase. After initiation quickly degrades to an ADP-DnaA complex that is not apt for DNA replication. Binds acidic phospholipids. In Clostridium perfringens (strain ATCC 13124 / DSM 756 / JCM 1290 / NCIMB 6125 / NCTC 8237 / Type A), this protein is Chromosomal replication initiator protein DnaA.